Reading from the N-terminus, the 209-residue chain is Probable GTP-binding protein EngB (209 aa).

The EngB-type G domain maps to 22 to 198; sequence TPLEIAFVGR…NRTVGSWLDA (177 aa). Ser-37 and Thr-59 together coordinate Mg(2+).

It belongs to the TRAFAC class TrmE-Era-EngA-EngB-Septin-like GTPase superfamily. EngB GTPase family. Mg(2+) serves as cofactor.

Its function is as follows. Necessary for normal cell division and for the maintenance of normal septation. The sequence is that of Probable GTP-binding protein EngB from Neisseria meningitidis serogroup B (strain ATCC BAA-335 / MC58).